Reading from the N-terminus, the 101-residue chain is Urease subunit beta (101 aa).

It belongs to the urease beta subunit family. In terms of assembly, heterotrimer of UreA (gamma), UreB (beta) and UreC (alpha) subunits. Three heterotrimers associate to form the active enzyme.

Its subcellular location is the cytoplasm. The enzyme catalyses urea + 2 H2O + H(+) = hydrogencarbonate + 2 NH4(+). It functions in the pathway nitrogen metabolism; urea degradation; CO(2) and NH(3) from urea (urease route): step 1/1. This Agrobacterium fabrum (strain C58 / ATCC 33970) (Agrobacterium tumefaciens (strain C58)) protein is Urease subunit beta.